The sequence spans 144 residues: MAYKHILIAVDLSPESKVLVEKAVSMARPYNAKISLIHVDVNYSDLYTGLIDVNLGDMQKRISEETHHALTELSTNAGYPITETLSGSGDLGQVLVDAIKKYDMDLVVCGHHQDFWSKLMSSARQLINTVHVDMLIVPLRDEEE.

This sequence belongs to the universal stress protein A family. As to quaternary structure, homodimer.

It is found in the cytoplasm. Functionally, required for resistance to DNA-damaging agents. This is Universal stress protein A (uspA) from Salmonella typhimurium (strain LT2 / SGSC1412 / ATCC 700720).